Here is a 131-residue protein sequence, read N- to C-terminus: Encapsulated ferritin-like protein (131 aa).

Residues Glu-30, Glu-60, and His-63 each contribute to the Fe cation site. The interval 96–131 (EEEDTGSSSSVAASPTSAPSHGSLGIGSLRQEGKED) is disordered. The segment at 98–131 (EDTGSSSSVAASPTSAPSHGSLGIGSLRQEGKED) is targeting peptide. Residues 102-115 (SSSSVAASPTSAPS) show a composition bias toward low complexity.

The protein belongs to the ferritin-like superfamily. EncFtn family. As to quaternary structure, forms dimers at all pH tested; under acidic conditions formes decamers. The N-terminal domain (residues 1-97) crystallizes as a decameric ring. Four decamers are loaded in the encapsulin nanocompartment in a tetrahedral arrangement. A 3 nm gap is consistently seen between the shell and the cargo. The target peptide extends away from the decameric ring, to allow binding to the interior of the encapsulin nanocompartment shell.

Its subcellular location is the encapsulin nanocompartment. The catalysed reaction is 4 Fe(2+) + O2 + 4 H(+) = 4 Fe(3+) + 2 H2O. Its activity is regulated as follows. The ferroxidase activity is inhibited by zinc. Cargo protein of a type 1 encapsulin nanocompartment. A ferritin-like ferroxidase that converts Fe(2+) to Fe(3+) iron inside the encapsulin nanocompartment. Mineralized Fe(3+) is released to the exterior of the decameric complex for deposition in the encapsulin nanocompartment. In solution the decamer binds 10-15 iron cations; in the encapsulin nanocompartment the decamer can bind up to 48 ions, perhaps via its internal channel, and on its exterior. The cargo-loaded nanocompartment maximally sequesters up to 4150 Fe ions. The polypeptide is Encapsulated ferritin-like protein (Haliangium ochraceum (strain DSM 14365 / JCM 11303 / SMP-2)).